The chain runs to 259 residues: Imidazole glycerol phosphate synthase subunit HisF (259 aa).

Catalysis depends on residues Asp-11 and Asp-130.

This sequence belongs to the HisA/HisF family. Heterodimer of HisH and HisF.

The protein localises to the cytoplasm. The enzyme catalyses 5-[(5-phospho-1-deoxy-D-ribulos-1-ylimino)methylamino]-1-(5-phospho-beta-D-ribosyl)imidazole-4-carboxamide + L-glutamine = D-erythro-1-(imidazol-4-yl)glycerol 3-phosphate + 5-amino-1-(5-phospho-beta-D-ribosyl)imidazole-4-carboxamide + L-glutamate + H(+). It functions in the pathway amino-acid biosynthesis; L-histidine biosynthesis; L-histidine from 5-phospho-alpha-D-ribose 1-diphosphate: step 5/9. In terms of biological role, IGPS catalyzes the conversion of PRFAR and glutamine to IGP, AICAR and glutamate. The HisF subunit catalyzes the cyclization activity that produces IGP and AICAR from PRFAR using the ammonia provided by the HisH subunit. This chain is Imidazole glycerol phosphate synthase subunit HisF, found in Polaromonas naphthalenivorans (strain CJ2).